Consider the following 1100-residue polypeptide: Regulator of nonsense transcripts 1 (1100 aa).

Positions 42 to 53 are enriched in low complexity; sequence SQTQTQGQTQSQ. Positions 42-67 are disordered; the sequence is SQTQTQGQTQSQLDNQVNGPDGVLPN. Positions 94-251 constitute a Upf1 CH-rich domain; sequence TKDLPVHACS…NKLEELWKEN (158 aa). C102, C105, C116, S119, C124, H134, H138, C144, C162, C165, C188, and C192 together coordinate Zn(2+). Residues 102–134 are C3H; sequence CSYCGIHDPACVVYCNTSKKWFCNGRGNTSGSH. A CC/SHH/C region spans residues 116 to 144; that stretch reads CNTSKKWFCNGRGNTSGSHIVNHLVRAKC. The tract at residues 162–192 is C4; the sequence is CYNCGCRNVFLLGFIPAKADSVVVLLCRQPC. ATP-binding positions include Q455, 475-479, Q645, Y682, and E813; that span reads GTGKT. Residues 978–1065 form a disordered region; the sequence is LGQVNGPAAG…QPELSQDSYL (88 aa). Residues 982–993 show a composition bias toward low complexity; it reads NGPAAGRGAPKG. The span at 1012-1063 shows a compositional bias: polar residues; the sequence is SGQPNMPNSQASQDLVSQPFSQGPLTQGYITMSQPSQMSQPGLSQPELSQDS.

The protein belongs to the DNA2/NAM7 helicase family.

It localises to the cytoplasm. The protein localises to the P-body. Its subcellular location is the nucleus. The protein resides in the perinuclear region. RNA-dependent helicase and ATPase required for nonsense-mediated decay (NMD) of mRNAs containing premature stop codons. Is recruited to mRNAs upon translation termination and undergoes a cycle of phosphorylation and dephosphorylation; its phosphorylation appears to be a key step in NMD. The formation of an upf1-upf2-upf3 surveillance complex is believed to activate NMD. This chain is Regulator of nonsense transcripts 1, found in Danio rerio (Zebrafish).